A 210-amino-acid chain; its full sequence is Large ribosomal subunit protein uL4 (210 aa).

A disordered region spans residues 41-79; it reads MANARQGTASTKTRAEVRGGGRKPWRQKGTGRARAGSNR. The segment covering 43 to 52 has biased composition (polar residues); it reads NARQGTASTK. The span at 60–71 shows a compositional bias: basic residues; it reads GGRKPWRQKGTG.

The protein belongs to the universal ribosomal protein uL4 family. Part of the 50S ribosomal subunit.

Functionally, one of the primary rRNA binding proteins, this protein initially binds near the 5'-end of the 23S rRNA. It is important during the early stages of 50S assembly. It makes multiple contacts with different domains of the 23S rRNA in the assembled 50S subunit and ribosome. In terms of biological role, forms part of the polypeptide exit tunnel. The sequence is that of Large ribosomal subunit protein uL4 from Cyanothece sp. (strain PCC 7425 / ATCC 29141).